The following is a 1295-amino-acid chain: DNA-directed RNA polymerase subunit beta' (1295 aa).

4 residues coordinate Zn(2+): Cys66, Cys68, Cys81, and Cys84. The Mg(2+) site is built by Asp562, Asp564, and Asp566. Zn(2+) is bound by residues Cys901, Cys975, Cys982, and Cys985.

The protein belongs to the RNA polymerase beta' chain family. The RNAP catalytic core consists of 2 alpha, 1 beta, 1 beta' and 1 omega subunit. When a sigma factor is associated with the core the holoenzyme is formed, which can initiate transcription. It depends on Mg(2+) as a cofactor. The cofactor is Zn(2+).

The catalysed reaction is RNA(n) + a ribonucleoside 5'-triphosphate = RNA(n+1) + diphosphate. Its function is as follows. DNA-dependent RNA polymerase catalyzes the transcription of DNA into RNA using the four ribonucleoside triphosphates as substrates. This Rubrobacter xylanophilus (strain DSM 9941 / JCM 11954 / NBRC 16129 / PRD-1) protein is DNA-directed RNA polymerase subunit beta'.